Here is a 308-residue protein sequence, read N- to C-terminus: Acetaldehyde dehydrogenase 1 (308 aa).

10–13 (SGNI) is an NAD(+) binding site. The active-site Acyl-thioester intermediate is Cys-128. Residues 159–167 (SAGPGTRAN) and Asn-285 each bind NAD(+).

The protein belongs to the acetaldehyde dehydrogenase family.

The enzyme catalyses acetaldehyde + NAD(+) + CoA = acetyl-CoA + NADH + H(+). The chain is Acetaldehyde dehydrogenase 1 from Salinispora arenicola (strain CNS-205).